Here is a 251-residue protein sequence, read N- to C-terminus: Protein FAM216A (251 aa).

Residues 1-16 show a composition bias toward polar residues; that stretch reads MPNQGPVSDWTECSSS. Positions 1–49 are disordered; that stretch reads MPNQGPVSDWTECSSSAEPPAVARAEGGGGGSAGHSYYQNSKDRIKDGH.

The protein belongs to the FAM216 family.

The protein is Protein FAM216A (FAM216A) of Bos taurus (Bovine).